Consider the following 452-residue polypeptide: Bifunctional protein GlmU (452 aa).

Residues 1–225 (MEVVILAAGQ…VSETLGVNSK (225 aa)) are pyrophosphorylase. UDP-N-acetyl-alpha-D-glucosamine-binding positions include 6–9 (LAAG), lysine 20, glutamine 71, 76–77 (GT), 98–100 (YGD), glycine 135, glutamate 150, asparagine 165, and asparagine 223. Aspartate 100 serves as a coordination point for Mg(2+). Asparagine 223 contributes to the Mg(2+) binding site. Residues 226–246 (PQLAELERIHQRNIAQRLMED) form a linker region. Residues 247–452 (GVTLIDPARI…AGWKRPVKQR (206 aa)) form an N-acetyltransferase region. UDP-N-acetyl-alpha-D-glucosamine is bound by residues arginine 329 and lysine 347. Residue histidine 359 is the Proton acceptor of the active site. The UDP-N-acetyl-alpha-D-glucosamine site is built by tyrosine 362 and asparagine 373. Acetyl-CoA-binding positions include alanine 376, 382-383 (NY), serine 401, alanine 419, and arginine 436.

The protein in the N-terminal section; belongs to the N-acetylglucosamine-1-phosphate uridyltransferase family. It in the C-terminal section; belongs to the transferase hexapeptide repeat family. In terms of assembly, homotrimer. The cofactor is Mg(2+).

It is found in the cytoplasm. The enzyme catalyses alpha-D-glucosamine 1-phosphate + acetyl-CoA = N-acetyl-alpha-D-glucosamine 1-phosphate + CoA + H(+). The catalysed reaction is N-acetyl-alpha-D-glucosamine 1-phosphate + UTP + H(+) = UDP-N-acetyl-alpha-D-glucosamine + diphosphate. It functions in the pathway nucleotide-sugar biosynthesis; UDP-N-acetyl-alpha-D-glucosamine biosynthesis; N-acetyl-alpha-D-glucosamine 1-phosphate from alpha-D-glucosamine 6-phosphate (route II): step 2/2. The protein operates within nucleotide-sugar biosynthesis; UDP-N-acetyl-alpha-D-glucosamine biosynthesis; UDP-N-acetyl-alpha-D-glucosamine from N-acetyl-alpha-D-glucosamine 1-phosphate: step 1/1. It participates in bacterial outer membrane biogenesis; LPS lipid A biosynthesis. Functionally, catalyzes the last two sequential reactions in the de novo biosynthetic pathway for UDP-N-acetylglucosamine (UDP-GlcNAc). The C-terminal domain catalyzes the transfer of acetyl group from acetyl coenzyme A to glucosamine-1-phosphate (GlcN-1-P) to produce N-acetylglucosamine-1-phosphate (GlcNAc-1-P), which is converted into UDP-GlcNAc by the transfer of uridine 5-monophosphate (from uridine 5-triphosphate), a reaction catalyzed by the N-terminal domain. The chain is Bifunctional protein GlmU from Azoarcus sp. (strain BH72).